Reading from the N-terminus, the 145-residue chain is Selenoprotein M (145 aa).

The N-terminal stretch at 1–23 (MSILLSPPSLLLLLAALVAPATS) is a signal peptide. Active-site nucleophile residues include Cys45 and Sec48. The segment at residues 45-48 (CGGU) is a cross-link (cysteinyl-selenocysteine (Cys-Sec)). Position 48 (Sec48) is a non-standard amino acid, selenocysteine. Residues 125 to 145 (PPEYLWAPAKPPEEASEHDDL) are disordered.

Belongs to the selenoprotein M/F family. Widely expressed. Highly expressed in brain.

The protein localises to the cytoplasm. The protein resides in the perinuclear region. Its subcellular location is the endoplasmic reticulum. It is found in the golgi apparatus. Functionally, may function as a thiol-disulfide oxidoreductase that participates in disulfide bond formation. This Mus musculus (Mouse) protein is Selenoprotein M.